A 411-amino-acid polypeptide reads, in one-letter code: Protein translocase subunit SecY (411 aa).

The next 10 membrane-spanning stretches (helical) occupy residues 13–33 (FTLL…PGID), 52–72 (IFSG…VPYI), 111–131 (ALGW…PYVF), 135–155 (FTFV…IMWL), 163–180 (GIGN…VSGL), 197–217 (SIKF…TIFV), 252–272 (GVMP…LTQL), 291–311 (LYLV…TSIV), 350–370 (FLGA…EKVA), and 377–397 (GLGA…AKQI).

This sequence belongs to the SecY/SEC61-alpha family. Component of the plastid Sec protein translocase complex, which is composed of at least SecY, SecE and SecG.

The protein resides in the plastid. Its subcellular location is the chloroplast thylakoid membrane. In terms of biological role, the central subunit of the protein translocation channel SecYE. Consists of two halves formed by TMs 1-5 and 6-10. These two domains form a lateral gate at the front which open onto the bilayer between TMs 2 and 7, and are clamped together by SecE at the back. The channel is closed by both a pore ring composed of hydrophobic SecY resides and a short helix (helix 2A) on the extracellular side of the membrane which forms a plug. This Porphyra purpurea (Red seaweed) protein is Protein translocase subunit SecY.